A 156-amino-acid chain; its full sequence is 6,7-dimethyl-8-ribityllumazine synthase (156 aa).

5-amino-6-(D-ribitylamino)uracil is bound by residues F25, 59 to 61 (AFE), and 83 to 85 (AVI). 88-89 (AT) is a binding site for (2S)-2-hydroxy-3-oxobutyl phosphate. H91 serves as the catalytic Proton donor. Residue F116 coordinates 5-amino-6-(D-ribitylamino)uracil. Residue R130 coordinates (2S)-2-hydroxy-3-oxobutyl phosphate.

The protein belongs to the DMRL synthase family.

The catalysed reaction is (2S)-2-hydroxy-3-oxobutyl phosphate + 5-amino-6-(D-ribitylamino)uracil = 6,7-dimethyl-8-(1-D-ribityl)lumazine + phosphate + 2 H2O + H(+). It functions in the pathway cofactor biosynthesis; riboflavin biosynthesis; riboflavin from 2-hydroxy-3-oxobutyl phosphate and 5-amino-6-(D-ribitylamino)uracil: step 1/2. Its function is as follows. Catalyzes the formation of 6,7-dimethyl-8-ribityllumazine by condensation of 5-amino-6-(D-ribitylamino)uracil with 3,4-dihydroxy-2-butanone 4-phosphate. This is the penultimate step in the biosynthesis of riboflavin. The sequence is that of 6,7-dimethyl-8-ribityllumazine synthase from Nitratidesulfovibrio vulgaris (strain DSM 19637 / Miyazaki F) (Desulfovibrio vulgaris).